Reading from the N-terminus, the 1028-residue chain is Receptor-type guanylate cyclase gcy-13 (1028 aa).

6 N-linked (GlcNAc...) asparagine glycosylation sites follow: asparagine 58, asparagine 156, asparagine 324, asparagine 337, asparagine 377, and asparagine 394. A helical transmembrane segment spans residues 438–458; that stretch reads IVVIVAVIIVLCCAAAAIAAF. Over 459-1028 the chain is Cytoplasmic; the sequence is LVIKARRDEE…WLLGMKEESA (570 aa). A disordered region spans residues 491-511; that stretch reads ESHHSSRSLQSNSTTTTGTTG. The span at 497–511 shows a compositional bias: low complexity; sequence RSLQSNSTTTTGTTG. The 272-residue stretch at 499–770 folds into the Protein kinase domain; it reads LQSNSTTTTG…DMVNKLMKNM (272 aa). Positions 786 to 817 form a coiled coil; sequence SVLEKHASSLEDEVQERMKELVEEKKKSDILL. Residues 844 to 974 form the Guanylate cyclase domain; that stretch reads TIFFSDVVGF…DTVNTASRME (131 aa).

The protein belongs to the adenylyl cyclase class-4/guanylyl cyclase family. As to expression, expressed bilaterally in RIM interneurons.

The protein resides in the cell membrane. It carries out the reaction GTP = 3',5'-cyclic GMP + diphosphate. Functionally, guanylate cyclase involved in the production of the second messenger cGMP. This chain is Receptor-type guanylate cyclase gcy-13, found in Caenorhabditis elegans.